Consider the following 994-residue polypeptide: Sarcoplasmic/endoplasmic reticulum calcium ATPase 1 (994 aa).

Topologically, residues 1-48 are cytoplasmic; sequence MEAAHSKSTEECLSYFGVSETTGLTPDQVKRHLEKYGPNELPAEEGKS. Residues 49–69 traverse the membrane as a helical segment; sequence LWELVVEQFEDLLVRILLLAA. The Lumenal portion of the chain corresponds to 70-89; that stretch reads CISFVLAWFEEGEETVTAFV. Residues 90–110 form a helical membrane-spanning segment; sequence EPFVILLILIANAIVGVWQER. The Cytoplasmic segment spans residues 111 to 253; that stretch reads NAENAIEALK…QDKTPLQQKL (143 aa). A helical membrane pass occupies residues 254–273; that stretch reads DEFGEQLSKVISLICVAVWL. Residues 274–295 are Lumenal-facing; that stretch reads INIGHFNDPVHGGSWFRGAIYY. A helical membrane pass occupies residues 296–313; that stretch reads FKIAVALAVAAIPEGLPA. The Ca(2+) site is built by V304, A305, I307, and E309. At 314–757 the chain is on the cytoplasmic side; the sequence is VITTCLALGT…EEGRAIYNNM (444 aa). D351 acts as the 4-aspartylphosphate intermediate in catalysis. D351 and T353 together coordinate Mg(2+). T353 contacts ATP. The residue at position 441 (T441) is a Phosphothreonine. E442, R489, K515, and R560 together coordinate ATP. T569 is modified (phosphothreonine). Phosphoserine is present on S581. 3 residues coordinate ATP: T625, G626, and D627. A Phosphoserine modification is found at S643. ATP-binding residues include R678 and K684. D703 lines the Mg(2+) pocket. N706 contributes to the ATP binding site. The helical transmembrane segment at 758–777 threads the bilayer; sequence KQFIRYLISSNVGEVVCIFL. Residues N768 and E771 each coordinate Ca(2+). Over 778-787 the chain is Lumenal; it reads TAALGLPEAL. The helical transmembrane segment at 788–808 threads the bilayer; the sequence is IPVQLLWVNLVTDGLPATALG. Residues 788-808 form an interaction with PLN region; that stretch reads IPVQLLWVNLVTDGLPATALG. The Ca(2+) site is built by N796, T799, and D800. Residues 809–828 lie on the Cytoplasmic side of the membrane; sequence FNPPDLDIMDRPPRSPKEPL. The helical transmembrane segment at 829–851 threads the bilayer; the sequence is ISGWLFFRYMAIGGYVGAATVGA. Residues 852-897 are Lumenal-facing; that stretch reads AAWWFLYAEDGPHVSYHQLTHFMQCTEHNPEFDGLDCEVFEAPEPM. Residues C876 and C888 are joined by a disulfide bond. A helical transmembrane segment spans residues 898 to 917; the sequence is TMALSVLVTIEMCNALNSLS. E908 lines the Ca(2+) pocket. The Cytoplasmic portion of the chain corresponds to 918–930; that stretch reads ENQSLLRMPPWVN. The chain crosses the membrane as a helical span at residues 931–949; that stretch reads IWLLGSICLSMSLHFLILY. The interval 932 to 943 is interaction with PLN; it reads WLLGSICLSMSL. The Lumenal segment spans residues 950-964; sequence VDPLPMIFKLRALDF. The chain crosses the membrane as a helical span at residues 965 to 985; that stretch reads TQWLMVLKISLPVIGLDELLK. At 986-994 the chain is on the cytoplasmic side; that stretch reads FIARNYLEG.

Belongs to the cation transport ATPase (P-type) (TC 3.A.3) family. Type IIA subfamily. As to quaternary structure, interacts with sarcolipin (SLN). Interacts with phospholamban (PLN). Interacts with myoregulin (MRLN). Interacts with DWORF. Interacts with VMP1. Mg(2+) is required as a cofactor.

It is found in the endoplasmic reticulum membrane. The protein localises to the sarcoplasmic reticulum membrane. It carries out the reaction Ca(2+)(in) + ATP + H2O = Ca(2+)(out) + ADP + phosphate + H(+). Its activity is regulated as follows. Inhibited by sarcolipin (SLN) and myoregulin (MRLN). Has also been shown to be reversibly inhibited by phospholamban (PLN) at low calcium concentrations in vitro. Dephosphorylated PLN decreases the apparent affinity of the ATPase for calcium in vitro and this inhibition is regulated by the phosphorylation of PLN. Enhanced by DWORF; DWORF increases activity by displacing sarcolipin (SLN), phospholamban (PLN) and myoregulin (MRLN). Its function is as follows. Key regulator of striated muscle performance by acting as the major Ca(2+) ATPase responsible for the reuptake of cytosolic Ca(2+) into the sarcoplasmic reticulum. Catalyzes the hydrolysis of ATP coupled with the translocation of calcium from the cytosol to the sarcoplasmic reticulum lumen. Contributes to calcium sequestration involved in muscular excitation/contraction. In Mus musculus (Mouse), this protein is Sarcoplasmic/endoplasmic reticulum calcium ATPase 1 (Atp2a1).